Consider the following 1493-residue polypeptide: Myosin-13 (1493 aa).

In terms of domain architecture, Myosin N-terminal SH3-like spans lysine 18–methionine 67. Positions serine 72–threonine 741 constitute a Myosin motor domain. Residues glycine 166–threonine 173 and asparagine 219–lysine 227 contribute to the ATP site. Actin-binding stretches follow at residues leucine 504–leucine 538, aspartate 540–valine 563, phenylalanine 598–leucine 622, and leucine 622–asparagine 644. 6 IQ domains span residues leucine 744 to asparagine 773, leucine 767 to alanine 796, arginine 792 to glutamine 821, tyrosine 813 to valine 842, lysine 836 to threonine 865, and leucine 859 to aspartate 888. Residues threonine 889–threonine 1057 are a coiled coil. A disordered region spans residues glutamine 1085–glutamine 1114. The span at serine 1102–glutamine 1114 shows a compositional bias: basic and acidic residues. A Dilute domain is found at aspartate 1161–aspartate 1444.

Belongs to the TRAFAC class myosin-kinesin ATPase superfamily. Myosin family. Plant myosin class XI subfamily. As to quaternary structure, homodimer.

Functionally, myosin heavy chain that is required for the cell cycle-regulated transport of various organelles and proteins for their segregation. Functions by binding with its tail domain to receptor proteins on organelles and exerting force with its N-terminal motor domain against actin filaments, thereby transporting its cargo along polarized actin cables. This is Myosin-13 (XI-G) from Arabidopsis thaliana (Mouse-ear cress).